Reading from the N-terminus, the 45-residue chain is Mu-conotoxin-like Cal 12.1.1d (45 aa).

Cystine bridges form between C3–C16, C11–C28, C18–C33, and C27–C39. W17 carries the 6'-bromotryptophan modification. A 4-carboxyglutamate modification is found at E21. P23 is subject to 4-hydroxyproline. 2 positions are modified to 6'-bromotryptophan: W37 and W38. P40 is modified (4-hydroxyproline). W44 bears the 6'-bromotryptophan mark.

Expressed by the venom duct.

It localises to the secreted. In terms of biological role, mu-conotoxins block voltage-gated sodium channels. This toxin reversibly blocks voltage-gated sodium channel in cephalopods, with no alteration in the voltage dependence of sodium conductance or on the kinetics of inactivation. This is Mu-conotoxin-like Cal 12.1.1d from Californiconus californicus (California cone).